Here is a 445-residue protein sequence, read N- to C-terminus: Succinate--CoA ligase [ADP-forming] subunit beta, mitochondrial (445 aa).

The transit peptide at Met1–Lys17 directs the protein to the mitochondrion. The ATP-grasp domain occupies Gln43 to Ile270. ATP contacts are provided by residues Lys80 and Gly87 to Gly89. Positions 240 and 254 each coordinate Mg(2+). Substrate-binding positions include Asn305 and Gly362–Met364.

This sequence belongs to the succinate/malate CoA ligase beta subunit family. ATP-specific subunit beta subfamily. In terms of assembly, heterodimer of an alpha and a beta subunit. The beta subunit determines specificity for ATP. The cofactor is Mg(2+).

It localises to the mitochondrion. It catalyses the reaction succinate + ATP + CoA = succinyl-CoA + ADP + phosphate. It participates in carbohydrate metabolism; tricarboxylic acid cycle; succinate from succinyl-CoA (ligase route): step 1/1. Functionally, ATP-specific succinyl-CoA synthetase functions in the citric acid cycle (TCA), coupling the hydrolysis of succinyl-CoA to the synthesis of ATP and thus represents the only step of substrate-level phosphorylation in the TCA. The beta subunit provides nucleotide specificity of the enzyme and binds the substrate succinate, while the binding sites for coenzyme A and phosphate are found in the alpha subunit. The polypeptide is Succinate--CoA ligase [ADP-forming] subunit beta, mitochondrial (scsC) (Dictyostelium discoideum (Social amoeba)).